A 61-amino-acid polypeptide reads, in one-letter code: Small ribosomal subunit protein uS14 (61 aa).

The Zn(2+) site is built by cysteine 24, cysteine 27, cysteine 40, and cysteine 43.

Belongs to the universal ribosomal protein uS14 family. Zinc-binding uS14 subfamily. As to quaternary structure, part of the 30S ribosomal subunit. Contacts proteins S3 and S10. Zn(2+) serves as cofactor.

Its function is as follows. Binds 16S rRNA, required for the assembly of 30S particles and may also be responsible for determining the conformation of the 16S rRNA at the A site. The protein is Small ribosomal subunit protein uS14 of Borrelia garinii subsp. bavariensis (strain ATCC BAA-2496 / DSM 23469 / PBi) (Borreliella bavariensis).